We begin with the raw amino-acid sequence, 545 residues long: Glucose-6-phosphate isomerase (545 aa).

The active-site Proton donor is E351. Residues H382 and K510 contribute to the active site.

It belongs to the GPI family.

The protein localises to the cytoplasm. The enzyme catalyses alpha-D-glucose 6-phosphate = beta-D-fructose 6-phosphate. The protein operates within carbohydrate biosynthesis; gluconeogenesis. Its pathway is carbohydrate degradation; glycolysis; D-glyceraldehyde 3-phosphate and glycerone phosphate from D-glucose: step 2/4. In terms of biological role, catalyzes the reversible isomerization of glucose-6-phosphate to fructose-6-phosphate. The sequence is that of Glucose-6-phosphate isomerase from Shewanella putrefaciens (strain CN-32 / ATCC BAA-453).